We begin with the raw amino-acid sequence, 163 residues long: uncharacterized protein (163 aa).

Positions 7 to 162 (ISISAVKLPQ…NVVYMRLEMS (156 aa)) constitute an N-acetyltransferase domain.

Belongs to the acetyltransferase family.

The protein resides in the cytoplasm. Its subcellular location is the nucleus. This is an uncharacterized protein from Schizosaccharomyces pombe (strain 972 / ATCC 24843) (Fission yeast).